The chain runs to 296 residues: MIYLHAIDPIAFSLGPVKVHWYGLMYLAAFFSAWSLGRSRILRGRLPGVDMDGFSDLLFYGMLGVVLGGRIGYMLFYAFETFVANPLILFKVWEGGMSFHGGLLGVLVACWLWARKHRLHFFDVMDFVAPLVPLGLGFGRLGNFVGGELWGKFTQAGWGVIFPHAPELADQLPAQIQAQYAAGALNQLARHPSQLYEAALEGVVMFVVLWTFSMKPRARYALSGLFALLYGVFRFIVEFVRVPDAPIGYLAFNWLTMGQILSLPLIAVGLALLAMSRRAPVLQPVLPTPAGVEAAK.

4 helical membrane-spanning segments follow: residues 10 to 30 (IAFS…LAAF), 57 to 77 (LLFY…MLFY), 92 to 112 (VWEG…ACWL), and 119 to 139 (LHFF…LGFG). Arg-140 is an a 1,2-diacyl-sn-glycero-3-phospho-(1'-sn-glycerol) binding site. A run of 3 helical transmembrane segments spans residues 194–214 (QLYE…TFSM), 220–240 (YALS…VEFV), and 254–274 (WLTM…ALLA).

It belongs to the Lgt family.

The protein localises to the cell inner membrane. The enzyme catalyses L-cysteinyl-[prolipoprotein] + a 1,2-diacyl-sn-glycero-3-phospho-(1'-sn-glycerol) = an S-1,2-diacyl-sn-glyceryl-L-cysteinyl-[prolipoprotein] + sn-glycerol 1-phosphate + H(+). It participates in protein modification; lipoprotein biosynthesis (diacylglyceryl transfer). Its function is as follows. Catalyzes the transfer of the diacylglyceryl group from phosphatidylglycerol to the sulfhydryl group of the N-terminal cysteine of a prolipoprotein, the first step in the formation of mature lipoproteins. The chain is Phosphatidylglycerol--prolipoprotein diacylglyceryl transferase from Xanthomonas oryzae pv. oryzae (strain MAFF 311018).